A 121-amino-acid chain; its full sequence is Basic phospholipase A2 homolog BaTX (121 aa).

Intrachain disulfides connect cysteine 26-cysteine 115, cysteine 28-cysteine 44, cysteine 43-cysteine 95, cysteine 49-cysteine 121, cysteine 50-cysteine 88, cysteine 57-cysteine 81, and cysteine 75-cysteine 86. Residues 105–117 (KKYRYYLKPLCKK) are important for membrane-damaging activities in eukaryotes and bacteria; heparin-binding.

This sequence belongs to the phospholipase A2 family. Group II subfamily. K49 sub-subfamily. As to quaternary structure, homodimer; non-covalently linked. As to expression, expressed by the venom gland.

The protein resides in the secreted. Snake venom phospholipase A2 homolog that lacks enzymatic activity. Is myotoxic and displays edema-inducing activities. In vitro, produced time-dependent, irreversible neuromuscular blockade in isolated mouse phrenic nerve-diaphragm and chick biventer cervicis preparations. A model of myotoxic mechanism has been proposed: an apo Lys49-PLA2 is activated by the entrance of a hydrophobic molecule (e.g. fatty acid) at the hydrophobic channel of the protein leading to a reorientation of a monomer. This reorientation causes a transition between 'inactive' to 'active' states, causing alignment of C-terminal and membrane-docking sites (MDoS) side-by-side and putting the membrane-disruption sites (MDiS) in the same plane, exposed to solvent and in a symmetric position for both monomers. The MDoS region stabilizes the toxin on membrane by the interaction of charged residues with phospholipid head groups. Subsequently, the MDiS region destabilizes the membrane with penetration of hydrophobic residues. This insertion causes a disorganization of the membrane, allowing an uncontrolled influx of ions (i.e. calcium and sodium), and eventually triggering irreversible intracellular alterations and cell death. The chain is Basic phospholipase A2 homolog BaTX from Bothrops alternatus (Urutu).